Consider the following 345-residue polypeptide: S-adenosylmethionine:tRNA ribosyltransferase-isomerase (345 aa).

It belongs to the QueA family. In terms of assembly, monomer.

It localises to the cytoplasm. It carries out the reaction 7-aminomethyl-7-carbaguanosine(34) in tRNA + S-adenosyl-L-methionine = epoxyqueuosine(34) in tRNA + adenine + L-methionine + 2 H(+). Its pathway is tRNA modification; tRNA-queuosine biosynthesis. In terms of biological role, transfers and isomerizes the ribose moiety from AdoMet to the 7-aminomethyl group of 7-deazaguanine (preQ1-tRNA) to give epoxyqueuosine (oQ-tRNA). The chain is S-adenosylmethionine:tRNA ribosyltransferase-isomerase from Acinetobacter baumannii (strain ATCC 17978 / DSM 105126 / CIP 53.77 / LMG 1025 / NCDC KC755 / 5377).